The chain runs to 298 residues: Release factor glutamine methyltransferase (298 aa).

S-adenosyl-L-methionine contacts are provided by residues 131–135 (GTGTG), Asp-162, Trp-189, and Asn-205. Substrate is bound at residue 205–208 (NPPY).

The protein belongs to the protein N5-glutamine methyltransferase family. PrmC subfamily.

It carries out the reaction L-glutaminyl-[peptide chain release factor] + S-adenosyl-L-methionine = N(5)-methyl-L-glutaminyl-[peptide chain release factor] + S-adenosyl-L-homocysteine + H(+). Its function is as follows. Methylates the class 1 translation termination release factors RF1/PrfA and RF2/PrfB on the glutamine residue of the universally conserved GGQ motif. The polypeptide is Release factor glutamine methyltransferase (Pasteurella multocida (strain Pm70)).